Consider the following 556-residue polypeptide: Formate--tetrahydrofolate ligase 1 (556 aa).

Residue 65-72 (TPAGEGKS) participates in ATP binding.

The protein belongs to the formate--tetrahydrofolate ligase family.

It carries out the reaction (6S)-5,6,7,8-tetrahydrofolate + formate + ATP = (6R)-10-formyltetrahydrofolate + ADP + phosphate. The protein operates within one-carbon metabolism; tetrahydrofolate interconversion. The sequence is that of Formate--tetrahydrofolate ligase 1 from Streptococcus pyogenes serotype M2 (strain MGAS10270).